A 1036-amino-acid chain; its full sequence is Histidine kinase 3 (1036 aa).

Residues 1–8 (MSLFHVLG) lie on the Extracellular side of the membrane. A helical membrane pass occupies residues 9 to 29 (FGVKIGHLFWMLCCWFVSWFV). Topologically, residues 30–94 (DNGIEDKSGL…VKFNKAWWRK (65 aa)) are cytoplasmic. The chain crosses the membrane as a helical span at residues 95–115 (LVVVWVVFWVLVSIWTFWYFS). Residues 116 to 399 (SQAMEKRKET…CRFKQKPPWP (284 aa)) are Extracellular-facing. Residues 163 to 389 (IPSAIDQRTF…GDPLRKHEMR (227 aa)) form the CHASE domain. The chain crosses the membrane as a helical span at residues 400 to 420 (VLSMVTSFGILVIALLVAHII). Residues 421-1036 (HATVSRIHKV…FFNSPSDTES (616 aa)) are Cytoplasmic-facing. Residues 457–723 (TVSHEIRTPM…TFTFTAVFSN (267 aa)) form the Histidine kinase domain. A Phosphohistidine; by autocatalysis modification is found at H460. Response regulatory domains lie at 746-865 (KAVV…QRGL) and 891-1028 (KILI…SRFF). Position 941 is a 4-aspartylphosphate (D941).

As to quaternary structure, interacts with AHK2, AHK4, AHP1, AHP2, AHP3, AHP5 and At5g43560. Autophosphorylated predominantly on His residues. Activation probably requires a transfer of a phosphate group between a His in the transmitter domain and an Asp of the receiver domain. As to expression, mostly expressed in leaves and flowers, and, to a lower extent, in roots, stems, and siliques, especially in the vascular tissues. Present in seedlings.

It is found in the cell membrane. Its subcellular location is the endoplasmic reticulum membrane. The enzyme catalyses ATP + protein L-histidine = ADP + protein N-phospho-L-histidine.. Activated by cytokinins to initiate phosphorelay signaling. This cytokinin-mediated activation is repressed by the trans-zeatin antagonists 6-(2-hydroxy-3-methylbenzylamino)purine (PI-55) and 6-(2,5-Dihydroxybenzylamino)purine (LGR-991). In terms of biological role, cytokinins (CK) receptor related to bacterial two-component regulators. Functions as a histidine kinase and transmits the stress signal to a downstream MAPK cascade. This protein undergoes an ATP-dependent autophosphorylation at a conserved histidine residue in the kinase core, and a phosphoryl group is then transferred to a conserved aspartate residue in the receiver domain. In the presence of cytokinin, feeds phosphate to phosphorelay-integrating histidine phosphotransfer protein (HPt) and activates subsequent cascade. Involved in meristems establishment in seedlings. Redundant negative regulator of drought and salt stress responses and abscisic acid (ABA) signaling. Together with AHK2, plays a negative regulatory role in cold stress signaling via inhibition of ABA response, occurring independently of the cold acclimation pathway. Redundant positive regulator of cytokinin signaling that regulates many developmental processes including seed germination, cell division, seed size, chlorophyll retention during leaf senescence, root repression and shoot promotion. Can interact with isoprenoid-type cytokinins trans-zeatin (tZ and tZR), cis-zeatin (cZ), dihydrozeatin (DZ), buta-2,3-dienyladenine (HA-8), penta-2,3-dienyladenine (HA-1), 4-methyl-penta-2,3-dienyladenine (HA-10), 4-hydroxy-2-butynyladenine (RM1), 2-propynyladenine (RM3), 2-butynyladenine (RM6), and cytokinin ribosides and ribotides. Together with AHK4, involved in the cytokinin-dependent responses to Pi starvation and sucrose stresses. Promotes cytokinin-mediated leaf longevity through a specific phosphorylation of the response regulator ARR2. Involved in alkamides (e.g. N-isobutyl decanamide) and N-acylethanolamides (NAE) signaling that control meristematic activity and differentiation processes during plant development. Contributes to vascular bundle formation and secondary growth in a cytokinin-dependent manner, probably by promoting the maintenance of mitotic activity and/or identity of procambial cells. Plays a role in the cytokinin-mediated repression of the iron uptake pathway. Required by the cytokinin-dependent flower development regulation pathway. This Arabidopsis thaliana (Mouse-ear cress) protein is Histidine kinase 3 (AHK3).